A 56-amino-acid polypeptide reads, in one-letter code: uncharacterized protein (56 aa).

This is an uncharacterized protein from Saccharomyces cerevisiae (strain ATCC 204508 / S288c) (Baker's yeast).